Consider the following 428-residue polypeptide: MQLLTIGINHHTAPVALRERVAFPLEQIKPALETFKSIWLGPSARTAPEAAILSTCNRTELYCATDDQAAREAAIQWLSRYHNLPIDELAPHVYALPQSEAVRHAFRVASGLDSMVLGETQIVGQMKDAVRTASEAGALGTYLNQLFQRTFAVAKEVRSTTEIGAQSVSMAAAAVRLAQRIFDKVSNQRVLFIGAGEMIELCATHFAAQQPRELVVANRTAERGTRLAERFNGRAIPLSELPSRMHEFDIIVSCTASTLPIIGLGAVERAVKARRHRPIFMVDLAVPRDIEPEVGQLEDVFLYTVDDLGAIVREGNASRQAAVAQAEAIIETRVQNFMQWLDARSIVPVIRHMHTQADVLRRAEVERAQKMLARGDDPAAVLEALSQSLTNKLIHGPTHALNRASSENRDKLIELMSGFYKHSGSTER.

Residues Thr55 to Arg58, Ser114, Glu119 to Gln121, and Gln125 each bind substrate. The Nucleophile role is filled by Cys56. Gly194–Ile199 contacts NADP(+).

The protein belongs to the glutamyl-tRNA reductase family. Homodimer.

The catalysed reaction is (S)-4-amino-5-oxopentanoate + tRNA(Glu) + NADP(+) = L-glutamyl-tRNA(Glu) + NADPH + H(+). It functions in the pathway porphyrin-containing compound metabolism; protoporphyrin-IX biosynthesis; 5-aminolevulinate from L-glutamyl-tRNA(Glu): step 1/2. Functionally, catalyzes the NADPH-dependent reduction of glutamyl-tRNA(Glu) to glutamate 1-semialdehyde (GSA). The chain is Glutamyl-tRNA reductase from Paraburkholderia phytofirmans (strain DSM 17436 / LMG 22146 / PsJN) (Burkholderia phytofirmans).